The following is a 437-amino-acid chain: Serine hydroxymethyltransferase 2 (437 aa).

Residues leucine 125 and 129-131 contribute to the (6S)-5,6,7,8-tetrahydrofolate site; that span reads GHL. Lysine 234 bears the N6-(pyridoxal phosphate)lysine mark.

The protein belongs to the SHMT family. In terms of assembly, homodimer. The cofactor is pyridoxal 5'-phosphate.

The protein resides in the cytoplasm. It catalyses the reaction (6R)-5,10-methylene-5,6,7,8-tetrahydrofolate + glycine + H2O = (6S)-5,6,7,8-tetrahydrofolate + L-serine. Its pathway is one-carbon metabolism; tetrahydrofolate interconversion. It functions in the pathway amino-acid biosynthesis; glycine biosynthesis; glycine from L-serine: step 1/1. Catalyzes the reversible interconversion of serine and glycine with tetrahydrofolate (THF) serving as the one-carbon carrier. This reaction serves as the major source of one-carbon groups required for the biosynthesis of purines, thymidylate, methionine, and other important biomolecules. Also exhibits THF-independent aldolase activity toward beta-hydroxyamino acids, producing glycine and aldehydes, via a retro-aldol mechanism. The protein is Serine hydroxymethyltransferase 2 of Mesorhizobium japonicum (strain LMG 29417 / CECT 9101 / MAFF 303099) (Mesorhizobium loti (strain MAFF 303099)).